The chain runs to 380 residues: Cytochrome b (380 aa).

Helical transmembrane passes span 34 to 54 (FGWL…FLAM), 78 to 99 (WLLR…YFHI), 114 to 134 (WNIG…GYVL), and 179 to 199 (FFTF…IHLL). The heme b site is built by histidine 84 and histidine 98. Heme b-binding residues include histidine 183 and histidine 197. Residue histidine 202 coordinates a ubiquinone. 4 consecutive transmembrane segments (helical) span residues 227 to 247 (FKDL…STFA), 289 to 309 (LGGV…PIIH), 321 to 341 (AAKA…WIGG), and 348 to 368 (FISI…LIIP).

Belongs to the cytochrome b family. As to quaternary structure, the cytochrome bc1 complex contains 3 respiratory subunits (MT-CYB, CYC1 and UQCRFS1), 2 core proteins (UQCRC1 and UQCRC2) and probably 6 low-molecular weight proteins. Requires heme b as cofactor.

It localises to the mitochondrion inner membrane. Component of the ubiquinol-cytochrome c reductase complex (complex III or cytochrome b-c1 complex) that is part of the mitochondrial respiratory chain. The b-c1 complex mediates electron transfer from ubiquinol to cytochrome c. Contributes to the generation of a proton gradient across the mitochondrial membrane that is then used for ATP synthesis. This chain is Cytochrome b (mt-cyb), found in Rana dybowskii (Dybovsky's frog).